A 203-amino-acid polypeptide reads, in one-letter code: A-type ATP synthase subunit E (203 aa).

The protein belongs to the V-ATPase E subunit family. Has multiple subunits with at least A(3), B(3), C, D, E, F, H, I and proteolipid K(x).

It localises to the cell membrane. Component of the A-type ATP synthase that produces ATP from ADP in the presence of a proton gradient across the membrane. The chain is A-type ATP synthase subunit E from Methanococcus maripaludis (strain C6 / ATCC BAA-1332).